Here is a 448-residue protein sequence, read N- to C-terminus: N-succinylarginine dihydrolase (448 aa).

Substrate is bound by residues 19 to 28 (GGLSYGNVAS), N110, and 137 to 138 (HR). The active site involves E174. R214 contributes to the substrate binding site. H250 is a catalytic residue. Residues D252 and N365 each coordinate substrate. C371 serves as the catalytic Nucleophile.

The protein belongs to the succinylarginine dihydrolase family. In terms of assembly, homodimer.

The catalysed reaction is N(2)-succinyl-L-arginine + 2 H2O + 2 H(+) = N(2)-succinyl-L-ornithine + 2 NH4(+) + CO2. The protein operates within amino-acid degradation; L-arginine degradation via AST pathway; L-glutamate and succinate from L-arginine: step 2/5. Its function is as follows. Catalyzes the hydrolysis of N(2)-succinylarginine into N(2)-succinylornithine, ammonia and CO(2). The chain is N-succinylarginine dihydrolase from Pseudomonas aeruginosa (strain UCBPP-PA14).